A 133-amino-acid chain; its full sequence is DNA-directed RNA polymerase subunit omega (133 aa).

It belongs to the RNA polymerase subunit omega family. The RNAP catalytic core consists of 2 alpha, 1 beta, 1 beta' and 1 omega subunit. When a sigma factor is associated with the core the holoenzyme is formed, which can initiate transcription.

The catalysed reaction is RNA(n) + a ribonucleoside 5'-triphosphate = RNA(n+1) + diphosphate. Its function is as follows. Promotes RNA polymerase assembly. Latches the N- and C-terminal regions of the beta' subunit thereby facilitating its interaction with the beta and alpha subunits. This is DNA-directed RNA polymerase subunit omega from Brucella abortus (strain S19).